We begin with the raw amino-acid sequence, 316 residues long: Coiled-coil domain-containing protein 42 (316 aa).

Coiled coils occupy residues 43–151 (RLLE…EYSI) and 182–236 (HHDL…SDVI).

This sequence belongs to the CFAP73 family. Interacts with ODF1 and ODF2. Interacts with CCDC38. Interacts with CCDC146. Interacts with CFAP53.

The protein resides in the cytoplasm. It is found in the perinuclear region. The protein localises to the cytoskeleton. It localises to the cell projection. Its subcellular location is the cilium. The protein resides in the flagellum. It is found in the microtubule organizing center. The protein localises to the centrosome. Functionally, essential for male fertility. Required for sperm development. The protein is Coiled-coil domain-containing protein 42 of Bos taurus (Bovine).